Reading from the N-terminus, the 95-residue chain is Large ribosomal subunit protein uL23 (95 aa).

The protein belongs to the universal ribosomal protein uL23 family. As to quaternary structure, part of the 50S ribosomal subunit. Contacts protein L29, and trigger factor when it is bound to the ribosome.

Its function is as follows. One of the early assembly proteins it binds 23S rRNA. One of the proteins that surrounds the polypeptide exit tunnel on the outside of the ribosome. Forms the main docking site for trigger factor binding to the ribosome. This chain is Large ribosomal subunit protein uL23, found in Deinococcus deserti (strain DSM 17065 / CIP 109153 / LMG 22923 / VCD115).